The primary structure comprises 430 residues: GTPase Obg (430 aa).

Residues 1-158 (MFIDKAKIYL…LTVVLELKLI (158 aa)) form the Obg domain. One can recognise an OBG-type G domain in the interval 159-330 (ADVGLVGFPN…LLSYVSKRLK (172 aa)). GTP-binding positions include 165–172 (GFPNVGKS), 190–194 (FTTLT), 212–215 (DIPG), 282–285 (NKTD), and 311–313 (SAA). Mg(2+) is bound by residues S172 and T192. The 80-residue stretch at 351-430 (KYEETEDKYH…MYSVEFEYFN (80 aa)) folds into the OCT domain.

This sequence belongs to the TRAFAC class OBG-HflX-like GTPase superfamily. OBG GTPase family. Monomer. Requires Mg(2+) as cofactor.

It is found in the cytoplasm. In terms of biological role, an essential GTPase which binds GTP, GDP and possibly (p)ppGpp with moderate affinity, with high nucleotide exchange rates and a fairly low GTP hydrolysis rate. Plays a role in control of the cell cycle, stress response, ribosome biogenesis and in those bacteria that undergo differentiation, in morphogenesis control. The chain is GTPase Obg from Alkaliphilus oremlandii (strain OhILAs) (Clostridium oremlandii (strain OhILAs)).